The primary structure comprises 193 residues: Probable chemoreceptor glutamine deamidase CheD 1 (193 aa).

A disordered region spans residues 1-26; that stretch reads MPHTPPAYPAASADHRPPSSPPAEPA.

The protein belongs to the CheD family.

It carries out the reaction L-glutaminyl-[protein] + H2O = L-glutamyl-[protein] + NH4(+). Probably deamidates glutamine residues to glutamate on methyl-accepting chemotaxis receptors (MCPs), playing an important role in chemotaxis. In Chromobacterium violaceum (strain ATCC 12472 / DSM 30191 / JCM 1249 / CCUG 213 / NBRC 12614 / NCIMB 9131 / NCTC 9757 / MK), this protein is Probable chemoreceptor glutamine deamidase CheD 1.